The sequence spans 443 residues: Thymidine phosphorylase (443 aa).

This sequence belongs to the thymidine/pyrimidine-nucleoside phosphorylase family. Homodimer.

It catalyses the reaction thymidine + phosphate = 2-deoxy-alpha-D-ribose 1-phosphate + thymine. The protein operates within pyrimidine metabolism; dTMP biosynthesis via salvage pathway; dTMP from thymine: step 1/2. In terms of biological role, the enzymes which catalyze the reversible phosphorolysis of pyrimidine nucleosides are involved in the degradation of these compounds and in their utilization as carbon and energy sources, or in the rescue of pyrimidine bases for nucleotide synthesis. The polypeptide is Thymidine phosphorylase (Shewanella sediminis (strain HAW-EB3)).